The primary structure comprises 438 residues: Ribosomal protein uS12 methylthiotransferase RimO (438 aa).

Residues 5–115 (PRVGFVSLGC…VMSAVHTHLP (111 aa)) form the MTTase N-terminal domain. C14, C50, C79, C146, C150, and C153 together coordinate [4Fe-4S] cluster. A Radical SAM core domain is found at 132 to 369 (LTPKHYAYLK…MAVQAEISAR (238 aa)). A TRAM domain is found at 372-438 (ERRVGQTLQV…SEHDLWGERR (67 aa)).

It belongs to the methylthiotransferase family. RimO subfamily. The cofactor is [4Fe-4S] cluster.

It is found in the cytoplasm. It catalyses the reaction L-aspartate(89)-[ribosomal protein uS12]-hydrogen + (sulfur carrier)-SH + AH2 + 2 S-adenosyl-L-methionine = 3-methylsulfanyl-L-aspartate(89)-[ribosomal protein uS12]-hydrogen + (sulfur carrier)-H + 5'-deoxyadenosine + L-methionine + A + S-adenosyl-L-homocysteine + 2 H(+). Its function is as follows. Catalyzes the methylthiolation of an aspartic acid residue of ribosomal protein uS12. This Chromobacterium violaceum (strain ATCC 12472 / DSM 30191 / JCM 1249 / CCUG 213 / NBRC 12614 / NCIMB 9131 / NCTC 9757 / MK) protein is Ribosomal protein uS12 methylthiotransferase RimO.